Consider the following 200-residue polypeptide: UPF0637 protein LCABL_14170 (200 aa).

This sequence belongs to the UPF0637 family.

The chain is UPF0637 protein LCABL_14170 from Lacticaseibacillus casei (strain BL23) (Lactobacillus casei).